The following is a 62-amino-acid chain: Ubiquinol-cytochrome c reductase complex 6.7 kDa protein (62 aa).

Residues Thr2–Asp25 lie on the Mitochondrial matrix side of the membrane. A helical transmembrane segment spans residues Ile26–Ile44. The Mitochondrial intermembrane portion of the chain corresponds to Gln45–Lys62.

The protein belongs to the UQCR11/QCR10 family. Component of the ubiquinol-cytochrome c oxidoreductase (cytochrome b-c1 complex, complex III, CIII), a multisubunit enzyme composed of 3 respiratory subunits cytochrome b, cytochrome c1 and Rieske protein, 2 core protein subunits, and additional low-molecular weight protein subunits. The complex exists as an obligatory dimer and forms supercomplexes (SCs) in the inner mitochondrial membrane with cytochrome c oxidase (complex IV, CIV).

The protein localises to the mitochondrion inner membrane. Component of the ubiquinol-cytochrome c oxidoreductase, a multisubunit transmembrane complex that is part of the mitochondrial electron transport chain which drives oxidative phosphorylation. The respiratory chain contains 3 multisubunit complexes succinate dehydrogenase (complex II, CII), ubiquinol-cytochrome c oxidoreductase (cytochrome b-c1 complex, complex III, CIII) and cytochrome c oxidase (complex IV, CIV), that cooperate to transfer electrons derived from NADH and succinate to molecular oxygen, creating an electrochemical gradient over the inner membrane that drives transmembrane transport and the ATP synthase. The cytochrome b-c1 complex catalyzes electron transfer from ubiquinol to cytochrome c, linking this redox reaction to translocation of protons across the mitochondrial inner membrane, with protons being carried across the membrane as hydrogens on the quinol. In the process called Q cycle, 2 protons are consumed from the matrix, 4 protons are released into the intermembrane space and 2 electrons are passed to cytochrome c. QCR10 has a role in CIII assembly and RIP1 stability. The protein is Ubiquinol-cytochrome c reductase complex 6.7 kDa protein of Solanum tuberosum (Potato).